The following is a 325-amino-acid chain: tRNA N6-adenosine threonylcarbamoyltransferase (325 aa).

His111 and His115 together coordinate Fe cation. Substrate contacts are provided by residues Leu134–Gly138, Asp167, Gly180, Asp184, and Asn284. Asp312 provides a ligand contact to Fe cation.

The protein belongs to the KAE1 / TsaD family. Fe(2+) serves as cofactor.

The protein resides in the cytoplasm. The catalysed reaction is L-threonylcarbamoyladenylate + adenosine(37) in tRNA = N(6)-L-threonylcarbamoyladenosine(37) in tRNA + AMP + H(+). Required for the formation of a threonylcarbamoyl group on adenosine at position 37 (t(6)A37) in tRNAs that read codons beginning with adenine. Is involved in the transfer of the threonylcarbamoyl moiety of threonylcarbamoyl-AMP (TC-AMP) to the N6 group of A37, together with TsaE and TsaB. TsaD likely plays a direct catalytic role in this reaction. This is tRNA N6-adenosine threonylcarbamoyltransferase from Trichodesmium erythraeum (strain IMS101).